The sequence spans 209 residues: MKYTTFGIISLFLSVTWALRFELAASFEPKPFCIRDFVEAGNQVVITMESDGRVGDGQVLSFYVIDSMGNEHRRKKNFAEKLNVAFTAPSSAVFDVCFENKAEAAGRSLMRNVEVNIESGSAARDWDKIRSAEKLRPAEVQLRQVEEMSDEIVERLNYLKLREERLRDTNESTNRRVRNFSMAVIVVFAALCAWQLNYLKNYFRAKHII.

Positions 1–18 are cleaved as a signal peptide; the sequence is MKYTTFGIISLFLSVTWA. The Lumenal segment spans residues 19 to 178; that stretch reads LRFELAASFE…TNESTNRRVR (160 aa). In terms of domain architecture, GOLD spans 31–119; sequence PFCIRDFVEA…MRNVEVNIES (89 aa). The chain crosses the membrane as a helical span at residues 179–199; that stretch reads NFSMAVIVVFAALCAWQLNYL. At 200-209 the chain is on the cytoplasmic side; it reads KNYFRAKHII.

Belongs to the EMP24/GP25L family.

It is found in the endoplasmic reticulum membrane. The protein localises to the golgi apparatus membrane. Functionally, constituent of COPII-coated endoplasmic reticulum-derived transport vesicles. Required for efficient transport of a subset of secretory proteins to the Golgi. Facilitates retrograde transport from the Golgi to the endoplasmic reticulum. The polypeptide is Endoplasmic reticulum vesicle protein 25 (ERV25) (Eremothecium gossypii (strain ATCC 10895 / CBS 109.51 / FGSC 9923 / NRRL Y-1056) (Yeast)).